The primary structure comprises 142 residues: Large ribosomal subunit protein uL13 (142 aa).

It belongs to the universal ribosomal protein uL13 family. In terms of assembly, part of the 50S ribosomal subunit.

In terms of biological role, this protein is one of the early assembly proteins of the 50S ribosomal subunit, although it is not seen to bind rRNA by itself. It is important during the early stages of 50S assembly. This chain is Large ribosomal subunit protein uL13, found in Xanthomonas oryzae pv. oryzae (strain MAFF 311018).